A 200-amino-acid polypeptide reads, in one-letter code: GTP cyclohydrolase 1 (200 aa).

The Zn(2+) site is built by Cys-87, His-90, and Cys-158.

It belongs to the GTP cyclohydrolase I family. As to quaternary structure, toroid-shaped homodecamer, composed of two pentamers of five dimers.

It carries out the reaction GTP + H2O = 7,8-dihydroneopterin 3'-triphosphate + formate + H(+). It functions in the pathway cofactor biosynthesis; 7,8-dihydroneopterin triphosphate biosynthesis; 7,8-dihydroneopterin triphosphate from GTP: step 1/1. The chain is GTP cyclohydrolase 1 from Xanthomonas axonopodis pv. citri (strain 306).